The sequence spans 323 residues: Lipoyl synthase (323 aa).

Positions 61, 66, 72, 87, 91, 94, and 300 each coordinate [4Fe-4S] cluster. The Radical SAM core domain occupies 73 to 289 (WDKKHATFMI…ETVAYTKGFL (217 aa)).

Belongs to the radical SAM superfamily. Lipoyl synthase family. It depends on [4Fe-4S] cluster as a cofactor.

It is found in the cytoplasm. The enzyme catalyses [[Fe-S] cluster scaffold protein carrying a second [4Fe-4S](2+) cluster] + N(6)-octanoyl-L-lysyl-[protein] + 2 oxidized [2Fe-2S]-[ferredoxin] + 2 S-adenosyl-L-methionine + 4 H(+) = [[Fe-S] cluster scaffold protein] + N(6)-[(R)-dihydrolipoyl]-L-lysyl-[protein] + 4 Fe(3+) + 2 hydrogen sulfide + 2 5'-deoxyadenosine + 2 L-methionine + 2 reduced [2Fe-2S]-[ferredoxin]. Its pathway is protein modification; protein lipoylation via endogenous pathway; protein N(6)-(lipoyl)lysine from octanoyl-[acyl-carrier-protein]: step 2/2. In terms of biological role, catalyzes the radical-mediated insertion of two sulfur atoms into the C-6 and C-8 positions of the octanoyl moiety bound to the lipoyl domains of lipoate-dependent enzymes, thereby converting the octanoylated domains into lipoylated derivatives. The protein is Lipoyl synthase of Sinorhizobium medicae (strain WSM419) (Ensifer medicae).